Consider the following 737-residue polypeptide: DNA mismatch repair protein MLH1 (737 aa).

Disordered stretches follow at residues 1–21 (MIDD…ATTI) and 378–416 (TLTS…PAGR). Positions 378–400 (TLTSQKSDSPVSQKPSGQKTQKV) are enriched in polar residues.

Belongs to the DNA mismatch repair MutL/HexB family. As to quaternary structure, heterodimer of MLH1 and PMS1, called MutLalpha, which is the major MMR MutL activity correcting base-base mismatches as well as IDLs. The heterodimer binds double strand DNA independently of a mismatch with positive cooperativity and has more than one DNA binding site. Heterodimer of MLH1 and MLH3, called MutLbeta, which is involved in correction of a specific subset of IDLs when associated with MutSbeta. As to expression, ubiquitous.

It is found in the nucleus. Functionally, involved in DNA mismatch repair (MMR), correcting insertion-deletion loops (IDLs) resulting from DNA replication, DNA damage or from recombination events between non-identical sequences during meiosis. Component of the MutLbeta heterodimer, which probably forms a ternary complex with the MutSbeta heterodimer that initially recognizes the DNA mismatches. This complex is thought to be responsible for directing the downstream MMR events, including strand discrimination, excision, and resynthesis. Plays a major role in promoting meiotic crossing-over and is involved in maintaining the genetic stability of simple sequence repeats by correction of frameshift intermediates. This chain is DNA mismatch repair protein MLH1 (MLH1), found in Arabidopsis thaliana (Mouse-ear cress).